The chain runs to 1336 residues: Coiled-coil and C2 domain-containing protein 2A (1336 aa).

2 disordered regions span residues 1-29 (MEAA…EQEV) and 70-97 (VEDC…QTFI). The span at 8 to 23 (KTAKKKRKTHTTRGYR) shows a compositional bias: basic residues. The span at 70 to 89 (VEDCQESDEDSGGELAEEPT) shows a compositional bias: acidic residues. Residues 136-156 (LSDLSELKDSQIRMLNRYQEQ) are a coiled coil. The C2 domain occupies 755-915 (PREPSGWSGH…LASRTFEGCI (161 aa)).

As to quaternary structure, probable component of the tectonic-like complex (also named MKS complex), composed of B9d1, B9d2, Cc2d2a, Mks1 and tctn. Expressed in the antennae of chordotonal neurons and male germ cells (at protein level).

It is found in the cytoplasm. The protein resides in the cytoskeleton. It localises to the cilium basal body. Its subcellular location is the microtubule organizing center. The protein localises to the centrosome. It is found in the centriole. Functionally, probable component of the tectonic-like complex (also named MKS complex), a complex localized at the transition zone of primary cilia. Required for ciliary structure and function. This Drosophila melanogaster (Fruit fly) protein is Coiled-coil and C2 domain-containing protein 2A.